A 212-amino-acid polypeptide reads, in one-letter code: Redox-sensing transcriptional repressor Rex (212 aa).

The segment at residues 17–56 is a DNA-binding region (H-T-H motif); that stretch reads LYYRIFKRFNTDGIEKASSKQIADALGIDSATVRRDFSYF. 91 to 96 contributes to the NAD(+) binding site; the sequence is GCGNIG.

It belongs to the transcriptional regulatory Rex family. Homodimer.

The protein localises to the cytoplasm. Its function is as follows. Modulates transcription in response to changes in cellular NADH/NAD(+) redox state. The chain is Redox-sensing transcriptional repressor Rex from Streptococcus agalactiae serotype III (strain NEM316).